We begin with the raw amino-acid sequence, 120 residues long: MRVKGGSVTRQRRKRWLEKAEGSWGTRNTSYRIARQTVIRAAEYAYRDRRNKKRDFRKLWISRINAAVRELGYTYSQFMNALVKANVVTKDGQGLNRKMLSELAINNPEAFNQLVNKVMK.

It belongs to the bacterial ribosomal protein bL20 family.

Binds directly to 23S ribosomal RNA and is necessary for the in vitro assembly process of the 50S ribosomal subunit. It is not involved in the protein synthesizing functions of that subunit. This is Large ribosomal subunit protein bL20 from Ureaplasma urealyticum serovar 10 (strain ATCC 33699 / Western).